Here is a 355-residue protein sequence, read N- to C-terminus: Phosphoserine aminotransferase (355 aa).

Arginine 41 contacts L-glutamate. Pyridoxal 5'-phosphate-binding positions include 75–76 (AS), tryptophan 99, threonine 147, aspartate 166, and glutamine 189. An N6-(pyridoxal phosphate)lysine modification is found at lysine 190. 231–232 (NT) is a binding site for pyridoxal 5'-phosphate.

It belongs to the class-V pyridoxal-phosphate-dependent aminotransferase family. SerC subfamily. Homodimer. Pyridoxal 5'-phosphate is required as a cofactor.

Its subcellular location is the cytoplasm. It carries out the reaction O-phospho-L-serine + 2-oxoglutarate = 3-phosphooxypyruvate + L-glutamate. It catalyses the reaction 4-(phosphooxy)-L-threonine + 2-oxoglutarate = (R)-3-hydroxy-2-oxo-4-phosphooxybutanoate + L-glutamate. Its pathway is amino-acid biosynthesis; L-serine biosynthesis; L-serine from 3-phospho-D-glycerate: step 2/3. It functions in the pathway cofactor biosynthesis; pyridoxine 5'-phosphate biosynthesis; pyridoxine 5'-phosphate from D-erythrose 4-phosphate: step 3/5. Its function is as follows. Catalyzes the reversible conversion of 3-phosphohydroxypyruvate to phosphoserine and of 3-hydroxy-2-oxo-4-phosphonooxybutanoate to phosphohydroxythreonine. This is Phosphoserine aminotransferase from Bacteroides thetaiotaomicron (strain ATCC 29148 / DSM 2079 / JCM 5827 / CCUG 10774 / NCTC 10582 / VPI-5482 / E50).